Here is a 201-residue protein sequence, read N- to C-terminus: Peptide deformylase 2 (201 aa).

Fe cation is bound by residues Cys121 and His163. Residue Glu164 is part of the active site. His167 serves as a coordination point for Fe cation.

Belongs to the polypeptide deformylase family. Fe(2+) serves as cofactor.

It carries out the reaction N-terminal N-formyl-L-methionyl-[peptide] + H2O = N-terminal L-methionyl-[peptide] + formate. Functionally, removes the formyl group from the N-terminal Met of newly synthesized proteins. Requires at least a dipeptide for an efficient rate of reaction. N-terminal L-methionine is a prerequisite for activity but the enzyme has broad specificity at other positions. The chain is Peptide deformylase 2 from Prochlorococcus marinus (strain MIT 9313).